Reading from the N-terminus, the 193-residue chain is Ion-translocating oxidoreductase complex subunit A (193 aa).

The next 6 membrane-spanning stretches (helical) occupy residues 5–25 (LLLL…FLGL), 39–59 (VGMG…SYLM), 63–83 (ILIP…VIAV), 102–122 (LLGI…VALL), 134–154 (IIYG…FAAM), and 171–191 (SIAM…TGLI).

Belongs to the NqrDE/RnfAE family. The complex is composed of six subunits: RnfA, RnfB, RnfC, RnfD, RnfE and RnfG.

The protein resides in the cell inner membrane. Part of a membrane-bound complex that couples electron transfer with translocation of ions across the membrane. In Aeromonas salmonicida (strain A449), this protein is Ion-translocating oxidoreductase complex subunit A.